The primary structure comprises 455 residues: Ammonium transporter Rh type B (455 aa).

The Cytoplasmic portion of the chain corresponds to 1 to 10 (MARIPRHRRL). The chain crosses the membrane as a helical span at residues 11–31 (VLPLLCLLFQGATSLLFAIFV). At 32–58 (RYNHETDAALWHWGNHSNVDNEFYFRY) the chain is on the extracellular side. Residue asparagine 46 is glycosylated (N-linked (GlcNAc...) asparagine). A helical membrane pass occupies residues 59–79 (PSFQDVHVMVFVGFGFLMVFL). The Cytoplasmic portion of the chain corresponds to 80 to 83 (QRYG). A helical membrane pass occupies residues 84-104 (FSSVGFTFLVATFTLQWATLL). The Extracellular segment spans residues 105-121 (QGFLHSFHGGHIHIGVE). The chain crosses the membrane as a helical span at residues 122–142 (SLINADFCAGAVLISFGAVLG). Topologically, residues 143–148 (KTGPAQ) are cytoplasmic. A helical transmembrane segment spans residues 149–169 (LLLMALLEAVLFSVNEFILLS). At 170-176 (LLGVRDA) the chain is on the extracellular side. Residues 177–197 (GGSMTIHTFGAYFGLFLSRVL) traverse the membrane as a helical segment. The Cytoplasmic portion of the chain corresponds to 198-216 (YRSQLEKSRHRQTSVYNSD). Residues 217–237 (LFAMIGTIFLWVFWPSFNSAP) form a helical membrane-spanning segment. Topologically, residues 238-247 (TALGDGQHRT) are extracellular. The chain crosses the membrane as a helical span at residues 248-270 (VVNTYYSLTASTLSTFALSALVS). The Cytoplasmic segment spans residues 271-274 (GDGR). The helical transmembrane segment at 275–295 (LDMVHIQNAALAGGVVVGTAS) threads the bilayer. A topological domain (extracellular) is located at residue glutamate 296. Residues 297–317 (MMLTPFGALAAGFLAGTVSTL) form a helical membrane-spanning segment. Topologically, residues 318–340 (GYKFFTPILESRFKLQDTCGVHN) are cytoplasmic. A helical transmembrane segment spans residues 341–361 (LHGMPGLLGAILGVLVAALAT). The Extracellular portion of the chain corresponds to 362–390 (HEAYGDGLQTVFPLIAKGQRSATSQAMYQ). Residues 391–411 (LFGMFVTLVFASVGGSLGGLL) form a helical membrane-spanning segment. Topologically, residues 412–455 (LKLPFLDSPPDSQCFEDQVYWEVPGEQEAETQRPLRTEEPDTQA) are cytoplasmic. Positions 413 to 421 (KLPFLDSPP) are interaction with ANK3.

The protein belongs to the ammonium transporter (TC 2.A.49) family. Rh subfamily. In terms of assembly, interacts (via C-terminus) with ANK2 and ANK3; required for targeting to the basolateral membrane. N-glycosylated. As to expression, expressed in kidney by connecting segments and collecting tubules (at protein level).

The protein localises to the basolateral cell membrane. Its subcellular location is the cytoplasmic vesicle membrane. The enzyme catalyses NH4(+)(in) = NH4(+)(out). The catalysed reaction is methylamine(out) = methylamine(in). It catalyses the reaction CO2(out) = CO2(in). Its function is as follows. Ammonium transporter involved in the maintenance of acid-base homeostasis. Transports ammonium and its related derivative methylammonium across the basolateral plasma membrane of epithelial cells likely contributing to renal transepithelial ammonia transport and ammonia metabolism. May transport either NH4(+) or NH3 ammonia species predominantly mediating an electrogenic NH4(+) transport. May act as a CO2 channel providing for renal acid secretion. The chain is Ammonium transporter Rh type B (Rhbg) from Rattus norvegicus (Rat).